Here is a 579-residue protein sequence, read N- to C-terminus: Extracellular serine/threonine protein kinase FAM20C (579 aa).

Over 1 to 10 (MKMILVRRFR) the chain is Cytoplasmic. A propeptide spanning residues 1–87 (MKMILVRRFR…PNKHTLRILQ (87 aa)) is cleaved from the precursor. The chain crosses the membrane as a helical; Signal-anchor for type II membrane protein span at residues 11-31 (VLILVVFLLACALHIAVDLLP). The Lumenal segment spans residues 32–579 (KLDRRATRSS…ATEHRASTER (548 aa)). The segment at 38 to 79 (TRSSGEPGCSCAQPAAEAAGPGWAQARSRPGESAGGDAGWPN) is disordered. Low complexity predominate over residues 49-63 (AQPAAEAAGPGWAQA). N-linked (GlcNAc...) asparagine glycosylation is present at Asn96. The interval 104–155 (KLPSAAEPVDHAPRGQEPRSPPPRDPAHRPLLRDPGPRPRVPPPGPSGDGSL) is disordered. 2 stretches are compositionally biased toward basic and acidic residues: residues 111-120 (PVDHAPRGQE) and 128-140 (DPAH…DPGP). Residues Gln264, Lys280, and Glu301 each contribute to the ATP site. Glu301 is a binding site for Mn(2+). The kinase domain stretch occupies residues 349 to 560 (FVSPANNICF…AVRDCVEKDG (212 aa)). Cystine bridges form between Cys357–Cys373 and Cys362–Cys366. Residue 384–387 (AAFL) participates in ATP binding. Intrachain disulfides connect Cys421–Cys495 and Cys496–Cys555. Residue Asp453 is part of the active site. ATP is bound by residues Glu458 and Asp473. Asp473 contacts Mn(2+).

This sequence belongs to the FAM20 family. As to quaternary structure, homodimer; disulfide-linked. Interacts with FAM20A; probably forming a heterotetramer of 2 subunits of FAM20A and 2 subunits of FAM20C. Interacts with COPII components SEC23A and SEC24A; transport of FAM20C from the endoplasmic reticulum to the Golgi is likely to be mediated by COPII vesicles. Mn(2+) is required as a cofactor. In terms of processing, N-glycosylation is required for folding. Post-translationally, autophosphorylated. Propeptide cleavage by MBTPS1/S1P promotes FAM20C secretion and maximal kinase activity which is essential for efficient osteoblast differentiation and biomineralization. In the mammary gland, expressed at higher levels in lactating mice than in virgin mice (at protein level). Highly expressed in the tooth. No expression in the dental pulp. At the secretory stage of amelogenesis, it is detected in the matrix of the enamel, in the ameloblasts, and within the cells adjoining the stratum intermedium (a tissue layer analogous to the stellate reticulum seen in the developing molar). Strong expression is observed in maturation stage ameloblasts and throughout the non-cornified layers of the gingival epithelium. Expressed at moderate levels in bone and at low levels in kidney, liver, brain and lung. Very low expression, if any, in spleen and skeletal muscle.

The protein resides in the golgi apparatus membrane. Its subcellular location is the secreted. It localises to the endoplasmic reticulum. It catalyses the reaction L-seryl-[protein] + ATP = O-phospho-L-seryl-[protein] + ADP + H(+). The enzyme catalyses L-threonyl-[protein] + ATP = O-phospho-L-threonyl-[protein] + ADP + H(+). Serine/threonine protein kinase activity is increased upon interaction with FAM20A. Its function is as follows. Golgi serine/threonine protein kinase that phosphorylates secretory pathway proteins within Ser-x-Glu/pSer motifs and plays a key role in biomineralization of bones and teeth. Constitutes the main protein kinase for extracellular proteins, generating the majority of the extracellular phosphoproteome. Mainly phosphorylates proteins within the Ser-x-Glu/pSer motif, but also displays a broader substrate specificity. Phosphorylates ERO1A, enhancing its activity which is required to maintain endoplasmic reticulum redox homeostasis and for oxidative protein folding. During endoplasmic reticulum stress, phosphorylates P4HB/PDIA1 which induces a functional switch, causing P4HB to change from an oxidoreductase to a molecular chaperone. This is critical to maintain ER proteostasis and reduce cell death under ER stress. Phosphorylation of P4HB also promotes its interaction with ERN1, leading to reduced activity of ERN1, a key sensor for the endoplasmic reticulum unfolded protein response. Required for osteoblast differentiation and mineralization. Phosphorylates casein as well as a number of proteins involved in biomineralization such as AMELX, AMTN, ENAM and SPP1. In addition to its role in biomineralization, also plays a role in lipid homeostasis, wound healing and cell migration and adhesion. The chain is Extracellular serine/threonine protein kinase FAM20C from Mus musculus (Mouse).